A 332-amino-acid polypeptide reads, in one-letter code: Glycerol-3-phosphate dehydrogenase [NAD(P)+] (332 aa).

NADPH-binding residues include Ser14, Trp15, Arg35, and Lys107. Sn-glycerol 3-phosphate-binding residues include Lys107, Gly137, and Ser139. Ala141 is an NADPH binding site. The sn-glycerol 3-phosphate site is built by Lys192, Asp245, Ser255, Arg256, and Asn257. Lys192 (proton acceptor) is an active-site residue. Arg256 lines the NADPH pocket. NADPH contacts are provided by Val280 and Glu282.

Belongs to the NAD-dependent glycerol-3-phosphate dehydrogenase family.

The protein localises to the cytoplasm. It catalyses the reaction sn-glycerol 3-phosphate + NAD(+) = dihydroxyacetone phosphate + NADH + H(+). The catalysed reaction is sn-glycerol 3-phosphate + NADP(+) = dihydroxyacetone phosphate + NADPH + H(+). The protein operates within membrane lipid metabolism; glycerophospholipid metabolism. Its function is as follows. Catalyzes the reduction of the glycolytic intermediate dihydroxyacetone phosphate (DHAP) to sn-glycerol 3-phosphate (G3P), the key precursor for phospholipid synthesis. In Desulfovibrio desulfuricans (strain ATCC 27774 / DSM 6949 / MB), this protein is Glycerol-3-phosphate dehydrogenase [NAD(P)+].